The sequence spans 447 residues: MIYENLVSEAGLTQKHLIHGDKELFQHELKTIFARNWLFLTHDSLIPSPGDYVTAKMGVDEVIVSRQNDGSVRAFLNVCRHRGKTLVHAEAGNAKGFVCSYHGWGFGSNGELQSVPFEKELYGDTIKKKCLGLKEVPRIESFHGFIYGCFDAEAPTLVDYLGDAAWYLEPIFKHSGGLELVGPPGKVVIKANWKAPAENFVGDAYHVGWTHASSLRSGQSIFTPLAGNAMLPPEGAGLQMTSKYGSGMGVLWDGYSGVHSADLVPEMMAFGGAKQEKLAKEIGDVRARIYRSHLNCTVFPNNSILTCSGVFKVWNPIDENTTEVWTYAIVEKDMPEDLKRRLADAVQRTFGPAGFWESDDNDNMETESQNAKKYQSSNSDLIANLGFGKDVYGDECYPGVVAKSAIGETSYRGFYRAYQAHISSSNWAEFENTSRNWHTELTKTTDR.

A Rieske domain is found at 37-135; sequence WLFLTHDSLI…IKKKCLGLKE (99 aa). Positions 79, 81, 99, and 102 each coordinate [2Fe-2S] cluster. Residues His-206, His-211, and Asp-360 each coordinate Fe cation.

It belongs to the bacterial ring-hydroxylating dioxygenase alpha subunit family. In terms of assembly, the naphthalene dioxygenase (NDO) multicomponent enzyme system is composed of an electron transfer component and a dioxygenase component (iron sulfur protein (ISP)). The electron transfer component is composed of a ferredoxin reductase (NagAa) and a ferredoxin (NagAb), and the dioxygenase component is formed by a large alpha subunit (NagAc) and a small beta subunit (NagAd). It depends on [2Fe-2S] cluster as a cofactor. The cofactor is Fe(2+).

It catalyses the reaction naphthalene + NADH + O2 + H(+) = (1R,2S)-1,2-dihydronaphthalene-1,2-diol + NAD(+). It participates in aromatic compound metabolism; naphthalene degradation. In terms of biological role, component of the naphthalene dioxygenase (NDO) multicomponent enzyme system which catalyzes the incorporation of both atoms of molecular oxygen into naphthalene to form cis-(1R,2S)-dihydroxy-1,2-dihydronaphthalene. The alpha subunit has a catalytic role in the holoenzyme. Also able to use styrene as substrate. This is Naphthalene 1,2-dioxygenase system, large oxygenase component from Ralstonia sp.